A 345-amino-acid polypeptide reads, in one-letter code: S-adenosylmethionine:tRNA ribosyltransferase-isomerase (345 aa).

This sequence belongs to the QueA family. Monomer.

It localises to the cytoplasm. It catalyses the reaction 7-aminomethyl-7-carbaguanosine(34) in tRNA + S-adenosyl-L-methionine = epoxyqueuosine(34) in tRNA + adenine + L-methionine + 2 H(+). The protein operates within tRNA modification; tRNA-queuosine biosynthesis. Transfers and isomerizes the ribose moiety from AdoMet to the 7-aminomethyl group of 7-deazaguanine (preQ1-tRNA) to give epoxyqueuosine (oQ-tRNA). In Shewanella sp. (strain MR-7), this protein is S-adenosylmethionine:tRNA ribosyltransferase-isomerase.